A 140-amino-acid chain; its full sequence is Nucleoside diphosphate kinase (140 aa).

K11, F59, R87, T93, R104, and N114 together coordinate ATP. The active-site Pros-phosphohistidine intermediate is H117.

It belongs to the NDK family. In terms of assembly, homotetramer. It depends on Mg(2+) as a cofactor.

It is found in the cytoplasm. It catalyses the reaction a 2'-deoxyribonucleoside 5'-diphosphate + ATP = a 2'-deoxyribonucleoside 5'-triphosphate + ADP. The catalysed reaction is a ribonucleoside 5'-diphosphate + ATP = a ribonucleoside 5'-triphosphate + ADP. Functionally, major role in the synthesis of nucleoside triphosphates other than ATP. The ATP gamma phosphate is transferred to the NDP beta phosphate via a ping-pong mechanism, using a phosphorylated active-site intermediate. The protein is Nucleoside diphosphate kinase of Gluconacetobacter diazotrophicus (strain ATCC 49037 / DSM 5601 / CCUG 37298 / CIP 103539 / LMG 7603 / PAl5).